The following is a 365-amino-acid chain: Histidinol-phosphate aminotransferase (365 aa).

At K227 the chain carries N6-(pyridoxal phosphate)lysine.

The protein belongs to the class-II pyridoxal-phosphate-dependent aminotransferase family. Histidinol-phosphate aminotransferase subfamily. Homodimer. Pyridoxal 5'-phosphate is required as a cofactor.

It carries out the reaction L-histidinol phosphate + 2-oxoglutarate = 3-(imidazol-4-yl)-2-oxopropyl phosphate + L-glutamate. Its pathway is amino-acid biosynthesis; L-histidine biosynthesis; L-histidine from 5-phospho-alpha-D-ribose 1-diphosphate: step 7/9. This Campylobacter concisus (strain 13826) protein is Histidinol-phosphate aminotransferase.